The primary structure comprises 141 residues: Nucleoside diphosphate kinase (141 aa).

ATP is bound by residues Lys11, Phe59, Arg87, Thr93, Arg104, and Asn114. Residue His117 is the Pros-phosphohistidine intermediate of the active site.

This sequence belongs to the NDK family. Homotetramer. It depends on Mg(2+) as a cofactor.

Its subcellular location is the cytoplasm. The catalysed reaction is a 2'-deoxyribonucleoside 5'-diphosphate + ATP = a 2'-deoxyribonucleoside 5'-triphosphate + ADP. It catalyses the reaction a ribonucleoside 5'-diphosphate + ATP = a ribonucleoside 5'-triphosphate + ADP. In terms of biological role, major role in the synthesis of nucleoside triphosphates other than ATP. The ATP gamma phosphate is transferred to the NDP beta phosphate via a ping-pong mechanism, using a phosphorylated active-site intermediate. This chain is Nucleoside diphosphate kinase, found in Cupriavidus taiwanensis (strain DSM 17343 / BCRC 17206 / CCUG 44338 / CIP 107171 / LMG 19424 / R1) (Ralstonia taiwanensis (strain LMG 19424)).